Here is a 478-residue protein sequence, read N- to C-terminus: Glycogen synthase (478 aa).

An ADP-alpha-D-glucose-binding site is contributed by K15.

This sequence belongs to the glycosyltransferase 1 family. Bacterial/plant glycogen synthase subfamily.

The enzyme catalyses [(1-&gt;4)-alpha-D-glucosyl](n) + ADP-alpha-D-glucose = [(1-&gt;4)-alpha-D-glucosyl](n+1) + ADP + H(+). The protein operates within glycan biosynthesis; glycogen biosynthesis. In terms of biological role, synthesizes alpha-1,4-glucan chains using ADP-glucose. This chain is Glycogen synthase, found in Actinobacillus pleuropneumoniae serotype 5b (strain L20).